The primary structure comprises 632 residues: DNA mismatch repair protein MutL (632 aa).

Positions 376-397 (EQPQAEPRQSFTPGSGAGSGYQ) are disordered.

It belongs to the DNA mismatch repair MutL/HexB family.

This protein is involved in the repair of mismatches in DNA. It is required for dam-dependent methyl-directed DNA mismatch repair. May act as a 'molecular matchmaker', a protein that promotes the formation of a stable complex between two or more DNA-binding proteins in an ATP-dependent manner without itself being part of a final effector complex. The protein is DNA mismatch repair protein MutL of Pseudomonas entomophila (strain L48).